A 571-amino-acid chain; its full sequence is uncharacterized protein (571 aa).

Disordered regions lie at residues 71–128, 142–258, and 298–336; these read TNHY…RVTA, NKND…PQNE, and LNRQPETRRNCQCPEKQQTPPPEETQNAQENDDQQTTKR. The span at 88 to 113 shows a compositional bias: polar residues; that stretch reads PNRSGVSSPVNDGASSPTQRGGTTPA. Pro residues predominate over residues 168 to 184; that stretch reads RGYPGPGPRGYPGPGPR. Positions 205–215 are enriched in low complexity; that stretch reads QGPRRYSCPGP. Residues 217–234 show a composition bias toward gly residues; sequence GYPGPGSSGRPDPGGGLQ. Residues 311-326 are compositionally biased toward low complexity; sequence PEKQQTPPPEETQNAQ.

This is an uncharacterized protein from Drosophila melanogaster (Fruit fly).